The following is an 893-amino-acid chain: MNYVGQLAGQVLVTVKELYKGINQATLSGCIDVVVVRQQDGSYQCSPFHVRFGKLGVLRSKEKVIDIEINGSAVDLHMKLGDNGEAFFVEETEEEYEKLPAYLATSPIPTEDQFFKHIETPLVKSSGNERPAQSSDVSHTLESEAVFTQSSVKKKKRRRKKCKQDNRKEEQAASPVAEDVGDVGVSSDDEKRAQAARGSSNASLKEEDYKEPSLFHSGDNYPLSDGDWSPLETTYPQAVCPKSDSELEVKPSESLLRSEPHMEWTWGGFPESTKVTKRERYDYHPRTATITPSENTHFRVIPSEDSLIREVEKDATVEDTTCTIVKPKPRALCKQLSDAASTELPESPLEAPQISSLLDADPVPSPSAEAPSEPKPAAKDSPTKKKGVHKRSQHQGPDDIYLDDLKALEPEVAALYFPKSDTDPGSRQWPESDTFSGSQSPQSVGSAAADSGTECLSDSAMDLPDVTLSLCGGLSENGEISKEKFMEHIITYHEFAENPGLIDNPNLVIRIYNRYYNWALAAPMILSLQVFQKSLPKATVESWVKDKMPKKSGRWWFWRKKESMIKQLPETKEGKSEVPPANDLPSNAEEPTSARPAENDTSSDEGSQELEESIKVDPITVETLSHCGTASYKKSLRLSSDQIAKLKLHDGPNDVVFSITTQYQGTCRCAGTIYLWNWNDKVIISDIDGTITKSDALGQILPQLGKDWTHQGIARLYHSINENGYKFLYCSARAIGMADMTRGYLHWVNDKGTILPRGPLMLSPSSLFSAFHREVIEKKPEKFKIECLNDIKNLFAPSRQPFYAAFGNRPNDVYAYTQVGVPDCRIFTVNPKGELIQERTKGNKSSYHRLSELVEHVFPLLSKEQNSAFPCPEFSSFCYWRDPIPDLDLDDLA.

The interval 1-108 (MNYVGQLAGQ…LPAYLATSPI (108 aa)) is N-LIP. The residue at position 106 (S106) is a Phosphoserine. The interval 122–216 (LVKSSGNERP…EDYKEPSLFH (95 aa)) is disordered. Polar residues predominate over residues 123 to 151 (VKSSGNERPAQSSDVSHTLESEAVFTQSS). Over residues 152–162 (VKKKKRRRKKC) the composition is skewed to basic residues. The Nuclear localization signal signature appears at 153-158 (KKKKRR). A phosphoserine mark is found at S174, S186, and S187. Over residues 204–213 (LKEEDYKEPS) the composition is skewed to basic and acidic residues. Residues S243 and S303 each carry the phosphoserine modification. Disordered regions lie at residues 357–400 (LLDA…PDDI) and 417–456 (FPKS…TECL). A compositionally biased stretch (low complexity) spans 360-371 (ADPVPSPSAEAP). Over residues 384–393 (KKKGVHKRSQ) the composition is skewed to basic residues. Polar residues predominate over residues 423–445 (DPGSRQWPESDTFSGSQSPQSVG). Position 563 is a phosphoserine (S563). Positions 568 to 611 (LPETKEGKSEVPPANDLPSNAEEPTSARPAENDTSSDEGSQELE) are disordered. A compositionally biased stretch (acidic residues) spans 601–611 (TSSDEGSQELE). A C-LIP region spans residues 632 to 834 (YKKSLRLSSD…RIFTVNPKGE (203 aa)). Residues 686–690 (DIDGT) carry the DXDXT motif motif. The short motif at 697 to 701 (LGQIL) is the LXXIL motif element.

Belongs to the lipin family. The cofactor is Mg(2+). In terms of tissue distribution, expressed at high level in liver and to some extend in lung, kidney, placenta, spleen, thymus, lymph node, prostate, testes, small intestine, and colon. Expressed also in circulating red blood cells and site of lymphopoiesis.

Its subcellular location is the nucleus. It localises to the cytoplasm. The protein resides in the cytosol. The protein localises to the endoplasmic reticulum membrane. It catalyses the reaction a 1,2-diacyl-sn-glycero-3-phosphate + H2O = a 1,2-diacyl-sn-glycerol + phosphate. With respect to regulation, inhibited by N-ethylmaleimide. Its function is as follows. Acts as a magnesium-dependent phosphatidate phosphatase enzyme which catalyzes the conversion of phosphatidic acid to diacylglycerol during triglyceride, phosphatidylcholine and phosphatidylethanolamine biosynthesis in the endoplasmic reticulum membrane. Plays important roles in controlling the metabolism of fatty acids at different levels. Also acts as a nuclear transcriptional coactivator for PPARGC1A to modulate lipid metabolism. In Mus musculus (Mouse), this protein is Phosphatidate phosphatase LPIN2.